The chain runs to 518 residues: Cytochrome P450 monooxygenase COX1 (518 aa).

The chain crosses the membrane as a helical span at residues 7–25 (VLIALSSIVVAYFVKTALA). Residues N48, N100, N292, N302, and N351 are each glycosylated (N-linked (GlcNAc...) asparagine). C450 lines the heme pocket. N-linked (GlcNAc...) asparagine glycosylation is present at N457.

Belongs to the cytochrome P450 family. Heme serves as cofactor.

It is found in the membrane. It functions in the pathway secondary metabolite biosynthesis. Functionally, cytochrome P450 monooxygenase; part of the gene cluster that mediates the biosynthesis of alpha-cuprenene and oxidized derivatives. The alpha-cuprenene synthase COP6 is the only sesquiterpene synthase identified in C.cinereus that appears to be part of a biosynthetic gene cluster and is highly specific since it catalyzes the cyclization of (2E,6E)-farnesyl diphosphate into only one product, alpha-cuprenene. The cytochrome P450 monooxygenase COX2 then oxidizes the cyclohexadiene ring of alpha-cuprenene at positions 1 and 4, yielding first alpha-cuparene, followed by alpha-cuparophenol and a further yet unidentified compound resulting from one additional oxidation step. The cytochrome P450 monooxygenase COX1 then likely catalyzes the oxidation at position 9 of the pentane ring of alpha-cuprenene to give the corresponding hydroxy or ketone derivatives. This Coprinopsis cinerea (strain Okayama-7 / 130 / ATCC MYA-4618 / FGSC 9003) (Inky cap fungus) protein is Cytochrome P450 monooxygenase COX1.